Consider the following 412-residue polypeptide: MSYIEKIDPELFEAIKNEADRQEHKLNLIASENYASRAVMEAQGSIMTNKYAEGYSGKRYYGGCDFVDVAENLAIARAKELFGAKYVNVQPHSGSGANMAVYFSVLQPGDTILSMDLSHGGHLSHGSPVSFSGKLYNIVPYGVSKETEALDYDELLKLAKECKPRMIVCGASAYPRVIDFKRFREIADEVGAYLLADIAHIAGLVVAGVHPSPVPYADFVTTTTHKTLRGPRGGMIISKTEELAIGVNKAVFPGIQGGPLMHIIAAKAVAFKEAMSEEFRQDQDQTVKNAKVLCSCLKQKGFDIVSGGTDNHLMLVNLNNMNITGKDAEAALSKAGIIANKNTVPFETRSPFVTSGVRLGTPSCTTRGMKEKEMELVADYIEAAIKNSENDALLSEINIKVRDLCLKFPVYE.

Residues leucine 117 and 121 to 123 (GHL) contribute to the (6S)-5,6,7,8-tetrahydrofolate site. Lysine 226 carries the post-translational modification N6-(pyridoxal phosphate)lysine. (6S)-5,6,7,8-tetrahydrofolate contacts are provided by residues glutamate 242 and 350–352 (SPF).

It belongs to the SHMT family. In terms of assembly, homodimer. Requires pyridoxal 5'-phosphate as cofactor.

Its subcellular location is the cytoplasm. The catalysed reaction is (6R)-5,10-methylene-5,6,7,8-tetrahydrofolate + glycine + H2O = (6S)-5,6,7,8-tetrahydrofolate + L-serine. Its pathway is one-carbon metabolism; tetrahydrofolate interconversion. It participates in amino-acid biosynthesis; glycine biosynthesis; glycine from L-serine: step 1/1. Functionally, catalyzes the reversible interconversion of serine and glycine with tetrahydrofolate (THF) serving as the one-carbon carrier. Also exhibits THF-independent aldolase activity toward beta-hydroxyamino acids, producing glycine and aldehydes, via a retro-aldol mechanism. The polypeptide is Serine hydroxymethyltransferase (Methanosarcina mazei (strain ATCC BAA-159 / DSM 3647 / Goe1 / Go1 / JCM 11833 / OCM 88) (Methanosarcina frisia)).